We begin with the raw amino-acid sequence, 293 residues long: AKT-interacting protein (293 aa).

The span at 1 to 11 (MNPFWSMSTSS) shows a compositional bias: polar residues. Residues 1 to 63 (MNPFWSMSTS…TSPAPAAQST (63 aa)) are disordered. Basic and acidic residues predominate over residues 14 to 23 (KRSEGEEKTL). Ser30 carries the post-translational modification Phosphoserine. The UBC core domain maps to 74–222 (YLEYSLLAEF…VVDSVQVCTA (149 aa)). Residues 253–265 (MLTQKKKPEEQHN) show a composition bias toward basic and acidic residues. Residues 253–293 (MLTQKKKPEEQHNKSVHVAGLSWVKPGSVQPFSKEEKTVAT) form a disordered region.

This sequence belongs to the ubiquitin-conjugating enzyme family. FTS subfamily. In terms of assembly, component of the FTS/Hook/FHIP complex (FHF complex), composed of AKTIP/FTS, FHIP1B, and one or more members of the Hook family of proteins HOOK1, HOOK2, and HOOK3. Interacts directly with HOOK1, HOOK2 and HOOK3. The FHF complex associates with the homotypic vesicular sorting complex (the HOPS complex). Also interacts with AKT1. May interact with FHIP1A.

The protein localises to the cytoplasm. It is found in the cell membrane. In terms of biological role, component of the FTS/Hook/FHIP complex (FHF complex). The FHF complex may function to promote vesicle trafficking and/or fusion via the homotypic vesicular protein sorting complex (the HOPS complex). Regulates apoptosis by enhancing phosphorylation and activation of AKT1. Increases release of TNFSF6 via the AKT1/GSK3B/NFATC1 signaling cascade. FHF complex promotes the distribution of AP-4 complex to the perinuclear area of the cell. The polypeptide is AKT-interacting protein (AKTIP) (Pongo abelii (Sumatran orangutan)).